A 693-amino-acid chain; its full sequence is Glycine--tRNA ligase beta subunit (693 aa).

The protein belongs to the class-II aminoacyl-tRNA synthetase family. Tetramer of two alpha and two beta subunits.

It localises to the cytoplasm. The catalysed reaction is tRNA(Gly) + glycine + ATP = glycyl-tRNA(Gly) + AMP + diphosphate. This chain is Glycine--tRNA ligase beta subunit, found in Natranaerobius thermophilus (strain ATCC BAA-1301 / DSM 18059 / JW/NM-WN-LF).